A 150-amino-acid polypeptide reads, in one-letter code: UPF0178 protein AHA_0543 (150 aa).

Belongs to the UPF0178 family.

This Aeromonas hydrophila subsp. hydrophila (strain ATCC 7966 / DSM 30187 / BCRC 13018 / CCUG 14551 / JCM 1027 / KCTC 2358 / NCIMB 9240 / NCTC 8049) protein is UPF0178 protein AHA_0543.